Consider the following 376-residue polypeptide: DNA-directed RNA polymerase subunit alpha (376 aa).

Residues 1–259 (MSDNSQNLLY…KHFSIFEKMD (259 aa)) form an alpha N-terminal domain (alpha-NTD) region. Residues 276-376 (KDDILHKLVL…EKIRSKNVKG (101 aa)) are alpha C-terminal domain (alpha-CTD).

This sequence belongs to the RNA polymerase alpha chain family. Homodimer. The RNAP catalytic core consists of 2 alpha, 1 beta, 1 beta' and 1 omega subunit. When a sigma factor is associated with the core the holoenzyme is formed, which can initiate transcription.

The enzyme catalyses RNA(n) + a ribonucleoside 5'-triphosphate = RNA(n+1) + diphosphate. Functionally, DNA-dependent RNA polymerase catalyzes the transcription of DNA into RNA using the four ribonucleoside triphosphates as substrates. This Chlamydia felis (strain Fe/C-56) (Chlamydophila felis) protein is DNA-directed RNA polymerase subunit alpha.